Consider the following 359-residue polypeptide: 3-dehydroquinate synthase (359 aa).

NAD(+) is bound by residues 69 to 74, 103 to 107, 127 to 128, lysine 140, lysine 149, and 167 to 170; these read DGEKYK, GVVGD, TT, and TLDT. Residues glutamate 182, histidine 245, and histidine 262 each coordinate Zn(2+).

This sequence belongs to the sugar phosphate cyclases superfamily. Dehydroquinate synthase family. It depends on Co(2+) as a cofactor. Zn(2+) serves as cofactor. The cofactor is NAD(+).

The protein localises to the cytoplasm. It catalyses the reaction 7-phospho-2-dehydro-3-deoxy-D-arabino-heptonate = 3-dehydroquinate + phosphate. The protein operates within metabolic intermediate biosynthesis; chorismate biosynthesis; chorismate from D-erythrose 4-phosphate and phosphoenolpyruvate: step 2/7. In terms of biological role, catalyzes the conversion of 3-deoxy-D-arabino-heptulosonate 7-phosphate (DAHP) to dehydroquinate (DHQ). This chain is 3-dehydroquinate synthase, found in Ruthia magnifica subsp. Calyptogena magnifica.